Consider the following 233-residue polypeptide: Small ribosomal subunit protein uS2 (233 aa).

It belongs to the universal ribosomal protein uS2 family.

The polypeptide is Small ribosomal subunit protein uS2 (Clostridium beijerinckii (strain ATCC 51743 / NCIMB 8052) (Clostridium acetobutylicum)).